A 200-amino-acid polypeptide reads, in one-letter code: NADH-quinone oxidoreductase subunit C (200 aa).

This sequence belongs to the complex I 30 kDa subunit family. NDH-1 is composed of 14 different subunits. Subunits NuoB, C, D, E, F, and G constitute the peripheral sector of the complex.

The protein resides in the cell inner membrane. The enzyme catalyses a quinone + NADH + 5 H(+)(in) = a quinol + NAD(+) + 4 H(+)(out). NDH-1 shuttles electrons from NADH, via FMN and iron-sulfur (Fe-S) centers, to quinones in the respiratory chain. The immediate electron acceptor for the enzyme in this species is believed to be ubiquinone. Couples the redox reaction to proton translocation (for every two electrons transferred, four hydrogen ions are translocated across the cytoplasmic membrane), and thus conserves the redox energy in a proton gradient. The chain is NADH-quinone oxidoreductase subunit C from Cereibacter sphaeroides (strain ATCC 17029 / ATH 2.4.9) (Rhodobacter sphaeroides).